The following is a 248-amino-acid chain: ATP synthase subunit a, chloroplastic (248 aa).

The next 5 helical transmembrane spans lie at 38-58 (QVLITSWIVIAVLLGSATIAV), 96-116 (VPFIGTMFLFIFVSNWSGALL), 135-155 (INTTVALALLTSVAYFYAGLA), 200-220 (LVVAVLVSPVPLVVPIPVMFL), and 221-241 (GLFTSGIQALIFATLAAAYIG).

Belongs to the ATPase A chain family. F-type ATPases have 2 components, CF(1) - the catalytic core - and CF(0) - the membrane proton channel. CF(1) has five subunits: alpha(3), beta(3), gamma(1), delta(1), epsilon(1). CF(0) has four main subunits: a, b, b' and c.

It localises to the plastid. Its subcellular location is the chloroplast thylakoid membrane. Its function is as follows. Key component of the proton channel; it plays a direct role in the translocation of protons across the membrane. The polypeptide is ATP synthase subunit a, chloroplastic (Pinus koraiensis (Korean pine)).